Reading from the N-terminus, the 402-residue chain is uncharacterized protein (402 aa).

Helical transmembrane passes span F12–V32, G48–A68, T80–T100, A101–L121, G134–V154, Q168–L188, W212–F232, W248–A268, G291–G311, M339–F359, and M367–G387.

This sequence belongs to the major facilitator superfamily. Cyanate porter (TC 2.A.1.17) family.

Its subcellular location is the cell membrane. This is an uncharacterized protein from Bacillus subtilis (strain 168).